Consider the following 381-residue polypeptide: MPYYTRDDNDVDDFDEFDPTPYSGGYDITVIYGRPIPPSDETCYPLSSGVDDDFEYERPEFTQIHEPSAYGDEALNTEYSSYSRPKPRPAFRPDSGGGGHVQGERPNPGYGSESGYGRKPESEYGSGYGGQTEVEYGRRPEQSYGSGYGGRTETESEYGSGGGGRTEVEYGRRPESGLGSGYGGRSESEYERKPSYGRSEEQEEGYRKPSYGRSEEQEEGYRKPSYGRSEEQEEGYRKPSYGRSEEEQEEGYRKPSYGRSEEQEEGSYRKPSYGRSDDQVESYIKPSYGRSEEQEEGSYRKPSYGRSEEQEEGSYRKQPSYGRGNDDDDDEQRRNRSGSGDDEEGSYGRKKYGGNDSDEDEEKKKHRHKHHHQKRRDEDDE.

2 disordered regions span residues 1-20 and 36-381; these read MPYY…FDPT and IPPS…EDDE. Residues 9 to 18 are compositionally biased toward acidic residues; that stretch reads NDVDDFDEFD. 2 stretches are compositionally biased toward basic and acidic residues: residues 166 to 175 and 186 to 237; these read TEVEYGRRPE and SESE…EGYR. Phosphoserine occurs at positions 339, 346, and 357. The span at 364–374 shows a compositional bias: basic residues; it reads KKHRHKHHHQK.

This is an uncharacterized protein from Arabidopsis thaliana (Mouse-ear cress).